The chain runs to 215 residues: UPF0056 membrane protein BU267 (215 aa).

Helical transmembrane passes span 14–34 (FFIG…FTTM), 56–76 (LILL…GISI), 81–101 (IAGG…QFIK), 120–140 (VVPL…TIVW), 150–170 (LFLC…CFEA), and 189–209 (IMGL…IGAI).

This sequence belongs to the UPF0056 (MarC) family.

The protein resides in the cell membrane. The polypeptide is UPF0056 membrane protein BU267 (Buchnera aphidicola subsp. Acyrthosiphon pisum (strain APS) (Acyrthosiphon pisum symbiotic bacterium)).